The primary structure comprises 302 residues: Arginase (302 aa).

The Mn(2+) site is built by His103, Asp126, His128, and Asp130. Residues 128–132, 139–141, and Asp180 each bind substrate; these read HGDLN and SGN. Residues Asp229 and Asp231 each contribute to the Mn(2+) site. The substrate site is built by Thr243 and Glu274.

Belongs to the arginase family. It depends on Mn(2+) as a cofactor.

It carries out the reaction L-arginine + H2O = urea + L-ornithine. It participates in nitrogen metabolism; urea cycle; L-ornithine and urea from L-arginine: step 1/1. The polypeptide is Arginase (arg) (Staphylococcus aureus (strain MRSA252)).